The primary structure comprises 542 residues: Zinc finger CCHC domain-containing protein 7 (542 aa).

A disordered region spans residues 110–144; that stretch reads QAQEKTQSPATPRSNKVANKCKRSNKKPEPEESPS. The segment covering 112-126 has biased composition (polar residues); that stretch reads QEKTQSPATPRSNKV. Residues Lys-129 and Lys-136 each participate in a glycyl lysine isopeptide (Lys-Gly) (interchain with G-Cter in SUMO2) cross-link. Position 142 is a phosphoserine (Ser-142). Residues Lys-236 and Lys-251 each participate in a glycyl lysine isopeptide (Lys-Gly) (interchain with G-Cter in SUMO2) cross-link. 3 CCHC-type zinc fingers span residues 238-255, 260-277, and 301-318; these read VTCR…NCPL, RPCC…GCPA, and KRCD…ACPE. Residue Lys-336 forms a Glycyl lysine isopeptide (Lys-Gly) (interchain with G-Cter in SUMO2) linkage. The CCHC-type 4 zinc finger occupies 345-362; it reads VYCYNCAQKGHYGHECTE. The interval 396–542 is disordered; the sequence is LKDIKKNGDF…RKKKPKSSGF (147 aa). Lys-410 participates in a covalent cross-link: Glycyl lysine isopeptide (Lys-Gly) (interchain with G-Cter in SUMO2). Residues 412-421 show a composition bias toward basic and acidic residues; that stretch reads PHGEETDRYH. The segment covering 422–435 has biased composition (basic residues); the sequence is HDRRKSRFSGKRSR. A Glycyl lysine isopeptide (Lys-Gly) (interchain with G-Cter in SUMO2) cross-link involves residue Lys-432. The segment covering 436 to 456 has biased composition (basic and acidic residues); that stretch reads WPRESKETQKEKTRGREGEKH. A Glycyl lysine isopeptide (Lys-Gly) (interchain with G-Cter in SUMO2) cross-link involves residue Lys-474. The span at 474 to 489 shows a compositional bias: low complexity; that stretch reads KPNSSSSSNSQKPSKS. 2 positions are modified to phosphoserine: Ser-478 and Ser-480. Residues Lys-485 and Lys-488 each participate in a glycyl lysine isopeptide (Lys-Gly) (interchain with G-Cter in SUMO2) cross-link. Basic and acidic residues-rich tracts occupy residues 499-510 and 518-528; these read LREEKLRRESMR and FVEDGSHDDLF. A Glycyl lysine isopeptide (Lys-Gly) (interchain with G-Cter in SUMO2) cross-link involves residue Lys-531. A compositionally biased stretch (basic residues) spans 531 to 542; the sequence is KQRKKKPKSSGF.

As to quaternary structure, component of a nucleolar TRAMP-like complex, an ATP-dependent exosome regulatory complex consisting of a helicase (MTREX), an oligadenylate polymerase (TENT4B or TENT4A), and a substrate specific RNA-binding factor (ZCCHC7 or ZCCHC8). Several TRAMP-like complexes exist with specific compositions and are associated with nuclear, or nucleolar RNA exosomes.

The protein resides in the nucleus. It is found in the nucleolus. In Rattus norvegicus (Rat), this protein is Zinc finger CCHC domain-containing protein 7 (Zcchc7).